Reading from the N-terminus, the 1580-residue chain is Transcriptional activator GLI3 (1580 aa).

Residue Met1 is modified to N-acetylmethionine. Polar residues-rich tracts occupy residues 1–10 (MEAQSHSSTT) and 58–78 (ITMQ…PSTS). Residues 1 to 79 (MEAQSHSSTT…KVSEEPSTSS (79 aa)) form a disordered region. The residue at position 175 (Arg175) is an Omega-N-methylarginine. Positions 368–475 (QSLGSAFGHS…DKDESKQEPE (108 aa)) are disordered. Over residues 401 to 427 (NPVQVSSGPSESSQNKPTSESAVSSTG) the composition is skewed to polar residues. Residues Lys438 and Lys462 each participate in a glycyl lysine isopeptide (Lys-Gly) (interchain with G-Cter in SUMO2) cross-link. Positions 461-474 (VKEEGDKDESKQEP) are enriched in basic and acidic residues. 5 consecutive C2H2-type zinc fingers follow at residues 480 to 505 (TNCH…NNDH), 513 to 540 (FVCR…MRRH), 546 to 570 (HKCT…LRSH), 576 to 601 (YVCE…NRTH), and 607 to 632 (YVCK…KTVH). The segment at 620–728 (DPSSLRKHVK…PISNYSNSGL (109 aa)) is disordered. Positions 632 to 648 (HGPEAHVTKKQRGDIHP) are enriched in basic and acidic residues. Ser664 carries the phosphoserine modification. Residues 684 to 699 (SKREECLQVKTVKAEK) are compositionally biased toward basic and acidic residues. Positions 703-726 (SQPSPGGQSSCSSQQSPISNYSNS) are enriched in low complexity. The mediates interaction with DZIP1 stretch occupies residues 745-845 (DETPIMDSTI…VDVTMLNMLN (101 aa)). A Glycyl lysine isopeptide (Lys-Gly) (interchain with G-Cter in ubiquitin) cross-link involves residue Lys773. Lys779 is covalently cross-linked (Glycyl lysine isopeptide (Lys-Gly) (interchain with G-Cter in SUMO2); alternate). Residue Lys779 forms a Glycyl lysine isopeptide (Lys-Gly) (interchain with G-Cter in ubiquitin); alternate linkage. Residues Lys784 and Lys800 each participate in a glycyl lysine isopeptide (Lys-Gly) (interchain with G-Cter in ubiquitin) cross-link. Ser849, Ser865, Ser877, and Ser907 each carry phosphoserine; by PKA. The segment covering 863-882 (RSSGISPCFSSRRSSEASQA) has biased composition (low complexity). Positions 863 to 918 (RSSGISPCFSSRRSSEASQAEGRPQNVSVADSYDPISTDASRRSSEASQSDGLPSL) are disordered. Polar residues predominate over residues 908–918 (EASQSDGLPSL). Phosphoserine; by PKA is present on residues Ser980 and Ser1006. A disordered region spans residues 981 to 1042 (DGGAHGYGRR…PAMATSAEKR (62 aa)).

The protein belongs to the GLI C2H2-type zinc-finger protein family. The full-length GLI3 form (GLI3FL) interacts with SUFU and this interaction regulates the formation of either repressor or activator forms of GLI3. Its association with SUFU is regulated by Hh signaling and dissociation of the SUFU-GLI3 interaction requires the presence of the ciliary motor KIF3A. Interacts with KIF7. The activator form of GLI3 (GLI3A) but not the repressor form (GLI3R) can interact with TRPS1. The phosphorylated form interacts with BTRC. Interacts with ZIC1. Interacts with ZIC3 (via C2H2-type domains 3, 4 and 5); the interaction enhances its transcriptional activity. Interacts with WRD11; the interaction associates EMX1 with GLI3. Interacts with DZIP1; retains GLI3 within the cytoplasm. Phosphorylated on multiple sites by protein kinase A (PKA) and phosphorylation by PKA primes further phosphorylation by CK1 and GSK3. Phosphorylated by DYRK2 (in vitro). Phosphorylation is essential for its proteolytic processing. Post-translationally, transcriptional repressor GLI3R, a C-terminally truncated form, is generated from the full-length GLI3 protein (GLI3FL/GLI3-190) through proteolytic processing. This process requires PKA-primed phosphorylation of GLI3, ubiquitination of GLI3 and the presence of BTRC. GLI3FL is complexed with SUFU in the cytoplasm and is maintained in a neutral state. Without the Hh signal, the SUFU-GLI3 complex is recruited to cilia, leading to the efficient processing of GLI3FL into GLI3R. GLI3R formation leads to its dissociation from SUFU, allowing it to translocate into the nucleus, and repress Hh target genes. When Hh signaling is initiated, SUFU dissociates from GLI3FL and this has two consequences. First, GLI3R production is halted. Second, free GLI3FL translocates to the nucleus, where it is phosphorylated, destabilized, and converted to a transcriptional activator (GLI3A). Phosphorylated in vitro by ULK3.

The protein resides in the nucleus. It is found in the cytoplasm. It localises to the cell projection. The protein localises to the cilium. In terms of biological role, has a dual function as a transcriptional activator and a repressor of the sonic hedgehog (Shh) pathway, and plays a role in limb development. The full-length GLI3 form (GLI3FL) after phosphorylation and nuclear translocation, acts as an activator (GLI3A) while GLI3R, its C-terminally truncated form, acts as a repressor. A proper balance between the GLI3 activator and the repressor GLI3R, rather than the repressor gradient itself or the activator/repressor ratio gradient, specifies limb digit number and identity. In concert with TRPS1, plays a role in regulating the size of the zone of distal chondrocytes, in restricting the zone of PTHLH expression in distal cells and in activating chondrocyte proliferation. Binds to the minimal GLI-consensus sequence 5'-GGGTGGTC-3'. Plays a role in limb and brain development. The protein is Transcriptional activator GLI3 (GLI3) of Pan troglodytes (Chimpanzee).